The following is a 294-amino-acid chain: Nucleotide-binding protein NT01CX_1284 (294 aa).

8 to 15 (GLSGAGKS) provides a ligand contact to ATP. GTP is bound at residue 59–62 (DIRG).

This sequence belongs to the RapZ-like family.

In terms of biological role, displays ATPase and GTPase activities. The polypeptide is Nucleotide-binding protein NT01CX_1284 (Clostridium novyi (strain NT)).